The following is a 373-amino-acid chain: Glutamate 5-kinase (373 aa).

Position 15 (Lys15) interacts with ATP. Substrate contacts are provided by Ser55, Asp142, and Asn154. Residues 174–175 and 216–222 each bind ATP; these read TD and TGGMATK. Residues 281-359 enclose the PUA domain; that stretch reads AGSIVVDAGA…SEIERILGFR (79 aa).

It belongs to the glutamate 5-kinase family.

It is found in the cytoplasm. The catalysed reaction is L-glutamate + ATP = L-glutamyl 5-phosphate + ADP. The protein operates within amino-acid biosynthesis; L-proline biosynthesis; L-glutamate 5-semialdehyde from L-glutamate: step 1/2. Functionally, catalyzes the transfer of a phosphate group to glutamate to form L-glutamate 5-phosphate. The chain is Glutamate 5-kinase from Geobacter sp. (strain M21).